A 393-amino-acid polypeptide reads, in one-letter code: E3 ubiquitin-protein transferase RMND5B (393 aa).

An N-acetylmethionine modification is found at methionine 1. In terms of domain architecture, LisH spans 116–148 (QQQILQMAIVEHLYQQGMLSVAEELCQESTLNV). One can recognise a CTLH domain in the interval 155–212 (PFLELNRILEALHEQDLGPALEWAVSHRQRLLELNSSLEFKLHRLHFIRLLAGGPAKQ). Residues 338–379 (CPILRQQTSDSNPPIKLICGHVISRDALNKLINGGKLKCPYC) form an RING-Gid-type zinc finger.

Identified in the CTLH complex that contains GID4, RANBP9 and/or RANBP10, MKLN1, MAEA, RMND5A (or alternatively its paralog RMND5B), GID8, ARMC8, WDR26 and YPEL5. Within this complex, MAEA, RMND5A (or alternatively its paralog RMND5B), GID8, WDR26, and RANBP9 and/or RANBP10 form the catalytic core, while GID4, MKLN1, ARMC8 and YPEL5 have ancillary roles.

It is found in the cytoplasm. It localises to the cytosol. It carries out the reaction S-ubiquitinyl-[E2 ubiquitin-conjugating enzyme]-L-cysteine + [acceptor protein]-L-lysine = [E2 ubiquitin-conjugating enzyme]-L-cysteine + N(6)-ubiquitinyl-[acceptor protein]-L-lysine.. In terms of biological role, core component of the CTLH E3 ubiquitin-protein ligase complex that selectively accepts ubiquitin from UBE2H and mediates ubiquitination and subsequent proteasomal degradation of the transcription factor HBP1. MAEA and RMND5A are both required for catalytic activity of the CTLH E3 ubiquitin-protein ligase complex. Catalytic activity of the complex is required for normal cell proliferation. The CTLH E3 ubiquitin-protein ligase complex is not required for the degradation of enzymes involved in gluconeogenesis, such as FBP1. The polypeptide is E3 ubiquitin-protein transferase RMND5B (RMND5B) (Homo sapiens (Human)).